Here is a 229-residue protein sequence, read N- to C-terminus: Protein ras-2 (229 aa).

GTP is bound at residue 15–22 (GDGGVGKT). The Effector region signature appears at 37 to 45 (YDPTIEDSY). Position 62–66 (62–66 (DTAGQ)) interacts with GTP. A disordered region spans residues 109–132 (KESTSSPSAYPGSSPLAATNPSAP). A compositionally biased stretch (low complexity) spans 111–126 (STSSPSAYPGSSPLAA). 140–143 (NKSD) provides a ligand contact to GTP. Residues 188–229 (LRKQRQQGQSTPRALPPSGNSKSEKYSGTEKPKRPRGKCLII) are disordered. Residues 209–219 (KSEKYSGTEKP) are compositionally biased toward basic and acidic residues. Basic residues predominate over residues 220 to 229 (KRPRGKCLII). Cysteine methyl ester is present on cysteine 226. Cysteine 226 carries the S-farnesyl cysteine lipid modification. The propeptide at 227–229 (LII) is removed in mature form.

This sequence belongs to the small GTPase superfamily. Ras family.

The protein resides in the cell membrane. It catalyses the reaction GTP + H2O = GDP + phosphate + H(+). Its function is as follows. Ras proteins bind GDP/GTP and possess intrinsic GTPase activity. This chain is Protein ras-2 (ras-2), found in Neurospora crassa (strain ATCC 24698 / 74-OR23-1A / CBS 708.71 / DSM 1257 / FGSC 987).